Consider the following 500-residue polypeptide: Probable malate:quinone oxidoreductase (500 aa).

This sequence belongs to the MQO family. It depends on FAD as a cofactor.

The enzyme catalyses (S)-malate + a quinone = a quinol + oxaloacetate. The protein operates within carbohydrate metabolism; tricarboxylic acid cycle; oxaloacetate from (S)-malate (quinone route): step 1/1. This is Probable malate:quinone oxidoreductase from Halalkalibacterium halodurans (strain ATCC BAA-125 / DSM 18197 / FERM 7344 / JCM 9153 / C-125) (Bacillus halodurans).